Consider the following 167-residue polypeptide: Urease accessory protein UreE (167 aa).

Residues 137-158 (EAGAYQSAPHGHSHSHAHGHDH) form a disordered region.

Belongs to the UreE family.

Its subcellular location is the cytoplasm. In terms of biological role, involved in urease metallocenter assembly. Binds nickel. Probably functions as a nickel donor during metallocenter assembly. The protein is Urease accessory protein UreE of Pseudomonas putida (strain ATCC 700007 / DSM 6899 / JCM 31910 / BCRC 17059 / LMG 24140 / F1).